A 488-amino-acid polypeptide reads, in one-letter code: Germacrene A hydroxylase (488 aa).

The Cytoplasmic segment spans residues 1-6 (MELSLT). The helical; Signal-anchor for type II membrane protein transmembrane segment at 7-23 (TSIALATIVLILYKLAT) threads the bilayer. Residues 24 to 488 (RPKSNKKRLP…KTELILVPSF (465 aa)) are Lumenal-facing. N-linked (GlcNAc...) asparagine glycans are attached at residues asparagine 260 and asparagine 379. Cysteine 432 contributes to the heme binding site.

This sequence belongs to the cytochrome P450 family. Heme is required as a cofactor.

The protein resides in the endoplasmic reticulum membrane. It localises to the microsome membrane. It catalyses the reaction (+)-(R)-germacrene A + 3 reduced [NADPH--hemoprotein reductase] + 3 O2 = germacra-1(10),4,11(13)-trien-12-oate + 3 oxidized [NADPH--hemoprotein reductase] + 4 H2O + 4 H(+). Its pathway is secondary metabolite biosynthesis; terpenoid biosynthesis. With respect to regulation, inhibited by cytochrome C, miconazole, aminobenzotriazole, metyrapone and clotrimazole. Involved in the biosynthesis of germacrene-derived sesquiterpene lactones. Catalyzes three consecutive oxidations of germacrene A to produce germacrene A acid. Could also catalyze the three-step oxidation of non-natural substrate amorphadiene to artemisinic acid. Can use beta-elemene as substrate. The chain is Germacrene A hydroxylase from Cichorium intybus (Chicory).